Reading from the N-terminus, the 196-residue chain is Imidazoleglycerol-phosphate dehydratase (196 aa).

This sequence belongs to the imidazoleglycerol-phosphate dehydratase family.

It localises to the cytoplasm. The catalysed reaction is D-erythro-1-(imidazol-4-yl)glycerol 3-phosphate = 3-(imidazol-4-yl)-2-oxopropyl phosphate + H2O. Its pathway is amino-acid biosynthesis; L-histidine biosynthesis; L-histidine from 5-phospho-alpha-D-ribose 1-diphosphate: step 6/9. In Ralstonia nicotianae (strain ATCC BAA-1114 / GMI1000) (Ralstonia solanacearum), this protein is Imidazoleglycerol-phosphate dehydratase.